A 218-amino-acid chain; its full sequence is Phosphatidylserine decarboxylase proenzyme (218 aa).

The Schiff-base intermediate with substrate; via pyruvic acid role is filled by Ser187. Ser187 is modified (pyruvic acid (Ser); by autocatalysis).

Belongs to the phosphatidylserine decarboxylase family. PSD-A subfamily. Heterodimer of a large membrane-associated beta subunit and a small pyruvoyl-containing alpha subunit. The cofactor is pyruvate. Is synthesized initially as an inactive proenzyme. Formation of the active enzyme involves a self-maturation process in which the active site pyruvoyl group is generated from an internal serine residue via an autocatalytic post-translational modification. Two non-identical subunits are generated from the proenzyme in this reaction, and the pyruvate is formed at the N-terminus of the alpha chain, which is derived from the carboxyl end of the proenzyme. The post-translation cleavage follows an unusual pathway, termed non-hydrolytic serinolysis, in which the side chain hydroxyl group of the serine supplies its oxygen atom to form the C-terminus of the beta chain, while the remainder of the serine residue undergoes an oxidative deamination to produce ammonia and the pyruvoyl prosthetic group on the alpha chain.

The protein localises to the cell membrane. The catalysed reaction is a 1,2-diacyl-sn-glycero-3-phospho-L-serine + H(+) = a 1,2-diacyl-sn-glycero-3-phosphoethanolamine + CO2. Its pathway is phospholipid metabolism; phosphatidylethanolamine biosynthesis; phosphatidylethanolamine from CDP-diacylglycerol: step 2/2. Functionally, catalyzes the formation of phosphatidylethanolamine (PtdEtn) from phosphatidylserine (PtdSer). In Geobacter sulfurreducens (strain ATCC 51573 / DSM 12127 / PCA), this protein is Phosphatidylserine decarboxylase proenzyme.